A 126-amino-acid chain; its full sequence is Scygonadin (126 aa).

Residues 1 to 24 (MRSSLLLGLTVVVLLGVIVPPCMA) form the signal peptide.

In terms of tissue distribution, expressed in the ejaculatory ducts of mature males. Not detected in the ejaculatory ducts of immature males. Not detected in hepatopancreas, female reproductive tract, eyes, exoskeleton, subcuticular epithelia, heart, gills, stomach, muscle and hemocytes.

The protein localises to the secreted. Has antibacterial activity against the Gram-positive bacterium M.luteus with an IC(90) of 125ug/ml. Has weak antibacterial activity against the Gram-negative bacterium A.hydrophila. The protein is Scygonadin of Scylla serrata (Mud crab).